The sequence spans 414 residues: TnpB-like protein MJ1635 (414 aa).

Zn(2+)-binding residues include Cys-329, Cys-332, Cys-346, and Cys-349.

This sequence in the N-terminal section; belongs to the transposase 2 family. In the C-terminal section; belongs to the transposase 35 family.

The protein is TnpB-like protein MJ1635 of Methanocaldococcus jannaschii (strain ATCC 43067 / DSM 2661 / JAL-1 / JCM 10045 / NBRC 100440) (Methanococcus jannaschii).